Here is a 550-residue protein sequence, read N- to C-terminus: MISDNVKKGVIRSPNRALLKACGYSDEDMEKPFIGVVNSFTEVVPGHIHLKTLSDVVKHGVYANGGTPFEFNTIGICDGIAMGHEGMKYSLPSREIIADAVESMARAHGFDGLVLIPTCDKIVPGMIMGALRLNIPFIVVTGGPMLPGEFQGKKYELISLFEGVGEYQVGKITEEELRCIEDCACPGAGSCAGLYTANSMACLTEALGLSLPMCATTHAIDAQKVRLAKKSGSKIVNMVKEDLKPTDILTKEAFENAILVDLALGGSTNTTLHIPAIANEIENKFITLDDFDRLSDEVPHIASIKPGGNHYMIDLHNAGGIPAVFNVLKEKIRNTKTVDGRSTLEIAESVKYINYNVIRKVEAPVHETAGLRVLKGNLAPNGCVVKIGAVNPKMHKHEGPAKVYNSEDEAISAILGGEIVKGDVVVIRYEGPSGGPGMREMLSPTSAICGMGLDDSVALITDGRFSGGSRGPCIGHVSPEAAAGGVIAAIENGDIIKIDMIGKEINVDLDESVIKERLSKLGEFEPKIKKGYLSRYSRLVSSADEGAVLK.

Asp-78 contributes to the Mg(2+) binding site. [2Fe-2S] cluster is bound at residue Cys-119. Mg(2+)-binding residues include Asp-120 and Lys-121. Residue Lys-121 is modified to N6-carboxylysine. Residue Cys-191 participates in [2Fe-2S] cluster binding. Glu-440 is a Mg(2+) binding site. The Proton acceptor role is filled by Ser-466.

It belongs to the IlvD/Edd family. In terms of assembly, homodimer. [2Fe-2S] cluster serves as cofactor. It depends on Mg(2+) as a cofactor.

The catalysed reaction is (2R)-2,3-dihydroxy-3-methylbutanoate = 3-methyl-2-oxobutanoate + H2O. It catalyses the reaction (2R,3R)-2,3-dihydroxy-3-methylpentanoate = (S)-3-methyl-2-oxopentanoate + H2O. It participates in amino-acid biosynthesis; L-isoleucine biosynthesis; L-isoleucine from 2-oxobutanoate: step 3/4. It functions in the pathway amino-acid biosynthesis; L-valine biosynthesis; L-valine from pyruvate: step 3/4. In terms of biological role, functions in the biosynthesis of branched-chain amino acids. Catalyzes the dehydration of (2R,3R)-2,3-dihydroxy-3-methylpentanoate (2,3-dihydroxy-3-methylvalerate) into 2-oxo-3-methylpentanoate (2-oxo-3-methylvalerate) and of (2R)-2,3-dihydroxy-3-methylbutanoate (2,3-dihydroxyisovalerate) into 2-oxo-3-methylbutanoate (2-oxoisovalerate), the penultimate precursor to L-isoleucine and L-valine, respectively. The chain is Dihydroxy-acid dehydratase from Methanococcus maripaludis (strain C6 / ATCC BAA-1332).